Here is a 1077-residue protein sequence, read N- to C-terminus: Hemoglobin and hemoglobin-haptoglobin-binding protein A (1077 aa).

Positions M1–A24 are cleaved as a signal peptide. The interval E25–N72 is disordered. A run of 11 repeats spans residues P26 to Q29, P30 to Q33, P34 to Q37, P38 to Q41, P42 to Q45, P46 to Q49, P50 to Q53, P54 to Q57, P58 to Q61, P62 to Q65, and P66 to Q69. The interval P26–Q69 is 11 X 4 AA tandem repeats of P-T-N-Q. A compositionally biased stretch (low complexity) spans P26–N70. The short motif at E78–S85 is the TonB box element. In terms of domain architecture, TBDR plug spans T89–K216. Positions N224 to F1077 constitute a TBDR beta-barrel domain. The TonB C-terminal box motif lies at N1060 to F1077.

The protein belongs to the TonB-dependent receptor family. Hemoglobin/haptoglobin binding protein subfamily.

The protein resides in the cell outer membrane. Acts as a receptor for hemoglobin or the hemoglobin/haptoglobin complex of the human host and is required for heme uptake. This chain is Hemoglobin and hemoglobin-haptoglobin-binding protein A (hgpA), found in Haemophilus influenzae.